The following is a 519-amino-acid chain: Membrane-bound glycerophospholipid O-acyltransferase 2 (519 aa).

The next 6 helical transmembrane spans lie at Pro-22–Phe-42, Thr-61–Val-81, Cys-88–Gly-108, Phe-184–Gly-204, Leu-236–Glu-256, and Tyr-288–Phe-305. Catalysis depends on residues Asn-341 and His-372. The next 3 membrane-spanning stretches (helical) occupy residues Phe-365–Gly-385, Ile-415–Leu-435, and Phe-443–Pro-463.

It belongs to the membrane-bound acyltransferase family.

The protein localises to the endoplasmic reticulum membrane. The catalysed reaction is a 1-acyl-sn-glycero-3-phosphocholine + an acyl-CoA = a 1,2-diacyl-sn-glycero-3-phosphocholine + CoA. It carries out the reaction a 1-acyl-sn-glycero-3-phosphoethanolamine + an acyl-CoA = a 1,2-diacyl-sn-glycero-3-phosphoethanolamine + CoA. It catalyses the reaction a 1-acyl-sn-glycero-3-phosphate + an acyl-CoA = a 1,2-diacyl-sn-glycero-3-phosphate + CoA. The enzyme catalyses (9Z)-hexadecenoyl-CoA + 1-hexadecanoyl-sn-glycero-3-phosphocholine = 1-hexadecanoyl-2-(9Z-hexadecenoyl)-sn-glycero-3-phosphocholine + CoA. The catalysed reaction is 1-hexadecanoyl-sn-glycero-3-phosphoethanolamine + (9Z)-octadecenoyl-CoA = 1-hexadecanoyl-2-(9Z-octadecenoyl)-sn-glycero-3-phosphoethanolamine + CoA. It carries out the reaction 1-hexadecanoyl-sn-glycero-3-phosphoethanolamine + (9Z)-hexadecenoyl-CoA = 1-hexadecanoyl-2-(9Z)-hexadecenoyl-sn-glycero-3-phosphoethanolamine + CoA. It catalyses the reaction 1-(9Z-octadecenoyl)-sn-glycero-3-phospho-L-serine + hexadecanoyl-CoA = 1-(9Z)-octadecenoyl-2-hexadecanoyl-sn-glycero-3-phosphoserine + CoA. The enzyme catalyses (9Z,12Z)-octadecadienoyl-CoA + 1-hexadecanoyl-sn-glycero-3-phosphocholine = 1-hexadecanoyl-2-(9Z,12Z-octadecadienoyl)-sn-glycero-3-phosphocholine + CoA. The catalysed reaction is 1-hexadecanoyl-sn-glycero-3-phosphocholine + (9Z)-octadecenoyl-CoA = 1-hexadecanoyl-2-(9Z-octadecenoyl)-sn-glycero-3-phosphocholine + CoA. It carries out the reaction 1-hexadecanoyl-sn-glycero-3-phosphate + (9Z)-hexadecenoyl-CoA = 1-hexadecanoyl-2-[(9Z)-hexadec-9-enoyl]-sn-glycero-3-phosphate + CoA. It catalyses the reaction 1-hexadecanoyl-sn-glycero-3-phosphate + (9Z)-octadecenoyl-CoA = 1-hexadecanoyl-2-(9Z-octadecenoyl)-sn-glycero-3-phosphate + CoA. The enzyme catalyses a 1-O-(1Z-alkenyl)-sn-glycero-3-phosphocholine + (9Z)-octadecenoyl-CoA = 1-O-(1Z)-alkenyl-2-(9Z)-octadecenoyl-sn-glycero-3-phosphocholine + CoA. The catalysed reaction is a 1-O-(1Z-alkenyl)-sn-glycero-3-phosphoethanolamine + (9Z)-octadecenoyl-CoA = 1-O-(1Z)-alkenyl-2-(9Z)-octadecenoyl-sn-glycero-3-phosphoethanolamine + CoA. It carries out the reaction 1-octadecanoyl-sn-glycero-3-phosphoethanolamine + (9Z)-octadecenoyl-CoA = 1-octadecanoyl-2-(9Z-octadecenoyl)-sn-glycero-3-phosphoethanolamine + CoA. It catalyses the reaction 1-octadecanoyl-sn-glycero-3-phosphocholine + (9Z)-octadecenoyl-CoA = 1-octadecanoyl-2-(9Z-octadecenoyl)-sn-glycero-3-phosphocholine + CoA. The enzyme catalyses 1-(9Z-octadecenoyl)-sn-glycero-3-phosphoethanolamine + (9Z)-octadecenoyl-CoA = 1,2-di-(9Z-octadecenoyl)-sn-glycero-3-phosphoethanolamine + CoA. Its pathway is lipid metabolism; phospholipid metabolism. With respect to regulation, partially inhibited by thimerosal. Its function is as follows. Acyltransferase which catalyzes the transfer of an acyl group from an acyl-CoA to a lysophospholipid leading to the production of a phospholipid and participates in the reacylation step of the phospholipid remodeling pathway also known as the Lands cycle. May catalyze preferentially the acylation of lysophosphatidylethanolamine (1-acyl-sn-glycero-3-phosphoethanolamine or LPE) and lysophosphatidic acid (LPA) and to a lesser extend lysophosphatidylcholine (LPC) and lysophosphatidylserine (LPS). Prefers oleoyl-CoA as the acyl donor. May be involved in chondrocyte differentiation. This Rattus norvegicus (Rat) protein is Membrane-bound glycerophospholipid O-acyltransferase 2.